The sequence spans 271 residues: (+)-cis,trans-nepetalactol synthase NEPS1 (271 aa).

Residues 24–30 (GGASGIG), 49–51 (DIQ), 72–73 (DV), and asparagine 99 contribute to the NAD(+) site. The substrate site is built by threonine 154 and tyrosine 167. NAD(+) is bound by residues tyrosine 167, lysine 171, and 200–205 (VLTPLA). Catalysis depends on tyrosine 167, which acts as the Proton acceptor.

The protein belongs to the short-chain dehydrogenases/reductases (SDR) family.

It carries out the reaction (S)-8-oxocitronellyl enol = cis-trans-nepetalactol. The enzyme catalyses cis-cis-nepetalactol + NAD(+) = cis-cis-nepetalactone + NADH + H(+). It catalyses the reaction cis-trans-nepetalactol + NAD(+) = cis-trans-nepetalactone + NADH + H(+). Bifunctional enzyme that possesses cyclase and dehydrogenase activities. Functions as a non-oxidoreductive cyclase to promote the formation of cis-trans-nepetalactol. Functions as dehydrogenase to oxidize cis-cis-nepetalactol and cis-trans-nepetalactol into nepetalactones, metabolites that are both insect-repellent and have euphoric effect in cats. Binds NAD(+) as classical short-chain dehydrogenase/reductase (SDR), but does not utilize it for its redox-neutral cyclase activity. The polypeptide is (+)-cis,trans-nepetalactol synthase NEPS1 (Nepeta racemosa (Catmint)).